Consider the following 30-residue polypeptide: Glucagon-like peptide (30 aa).

Arg-30 is modified (arginine amide).

Belongs to the glucagon family.

It is found in the secreted. The polypeptide is Glucagon-like peptide (Anguilla anguilla (European freshwater eel)).